The following is a 280-amino-acid chain: Protein HEAT-INDUCED TAS1 TARGET 4 (280 aa).

This sequence belongs to the heat induced plant HTT protein family. In terms of tissue distribution, expressed in seedlings, leaves, stems, inflorescences and siliques.

The protein localises to the cytoplasm. It is found in the nucleus. In terms of biological role, mediates both basal and acquired thermotolerance. This chain is Protein HEAT-INDUCED TAS1 TARGET 4, found in Arabidopsis thaliana (Mouse-ear cress).